The following is a 242-amino-acid chain: Pyridoxine 5'-phosphate synthase (242 aa).

Asn-6 provides a ligand contact to 3-amino-2-oxopropyl phosphate. 8-9 (DH) provides a ligand contact to 1-deoxy-D-xylulose 5-phosphate. Arg-17 contributes to the 3-amino-2-oxopropyl phosphate binding site. The active-site Proton acceptor is His-42. Residues Arg-44 and His-49 each coordinate 1-deoxy-D-xylulose 5-phosphate. The active-site Proton acceptor is the Glu-69. Thr-99 contacts 1-deoxy-D-xylulose 5-phosphate. The active-site Proton donor is His-190. 3-amino-2-oxopropyl phosphate contacts are provided by residues Gly-191 and 212–213 (GH).

It belongs to the PNP synthase family. In terms of assembly, homooctamer; tetramer of dimers.

Its subcellular location is the cytoplasm. It catalyses the reaction 3-amino-2-oxopropyl phosphate + 1-deoxy-D-xylulose 5-phosphate = pyridoxine 5'-phosphate + phosphate + 2 H2O + H(+). The protein operates within cofactor biosynthesis; pyridoxine 5'-phosphate biosynthesis; pyridoxine 5'-phosphate from D-erythrose 4-phosphate: step 5/5. Functionally, catalyzes the complicated ring closure reaction between the two acyclic compounds 1-deoxy-D-xylulose-5-phosphate (DXP) and 3-amino-2-oxopropyl phosphate (1-amino-acetone-3-phosphate or AAP) to form pyridoxine 5'-phosphate (PNP) and inorganic phosphate. The protein is Pyridoxine 5'-phosphate synthase of Neisseria meningitidis serogroup B (strain ATCC BAA-335 / MC58).